The chain runs to 184 residues: Urease accessory protein UreE (184 aa).

A disordered region spans residues 147–184 (EHHGHSHSHSHSHDHDHDHDHDHQHGPSCSHGHHHGHR). A compositionally biased stretch (basic and acidic residues) spans 157–171 (HSHDHDHDHDHDHQH).

The protein belongs to the UreE family.

It localises to the cytoplasm. In terms of biological role, involved in urease metallocenter assembly. Binds nickel. Probably functions as a nickel donor during metallocenter assembly. The sequence is that of Urease accessory protein UreE from Burkholderia mallei (strain ATCC 23344).